Reading from the N-terminus, the 166-residue chain is Protein phosphatase 1 regulatory subunit 1A (166 aa).

Met-1 carries the post-translational modification N-acetylmethionine. Positions 1–166 are disordered; it reads MEQDNSPRKI…SQDSQGASAV (166 aa). An essential for activity region spans residues 9 to 12; that stretch reads KIQF. Over residues 19–29 the composition is skewed to basic and acidic residues; that stretch reads PHLDPEAAEQI. The residue at position 35 (Thr-35) is a Phosphothreonine; by PKA. The tract at residues 42–54 is essential for activity; the sequence is TSDQSSPEVDEDR. A phosphoserine mark is found at Ser-43, Ser-46, Ser-47, and Ser-67. Low complexity predominate over residues 104–114; that stretch reads AAEGTGAQESQ. The span at 143–152 shows a compositional bias: basic and acidic residues; it reads AQERRGEEPS. The tract at residues 143 to 166 is interaction with PPP1R15A; sequence AQERRGEEPSTAKTSQDSQGASAV. The span at 153 to 166 shows a compositional bias: polar residues; that stretch reads TAKTSQDSQGASAV.

This sequence belongs to the protein phosphatase inhibitor 1 family. In terms of assembly, interacts with PPP1R15A. Post-translationally, phosphorylation of Thr-35 is required for activity.

Its function is as follows. Inhibitor of protein-phosphatase 1. This protein may be important in hormonal control of glycogen metabolism. Hormones that elevate intracellular cAMP increase I-1 activity in many tissues. I-1 activation may impose cAMP control over proteins that are not directly phosphorylated by PKA. Following a rise in intracellular calcium, I-1 is inactivated by calcineurin (or PP2B). Does not inhibit type-2 phosphatases. The sequence is that of Protein phosphatase 1 regulatory subunit 1A (PPP1R1A) from Oryctolagus cuniculus (Rabbit).